The chain runs to 139 residues: Nucleoside diphosphate kinase (139 aa).

Positions 10, 58, 86, 92, 103, and 113 each coordinate ATP. Histidine 116 (pros-phosphohistidine intermediate) is an active-site residue.

This sequence belongs to the NDK family. As to quaternary structure, homotetramer. Requires Mg(2+) as cofactor.

It localises to the cytoplasm. It catalyses the reaction a 2'-deoxyribonucleoside 5'-diphosphate + ATP = a 2'-deoxyribonucleoside 5'-triphosphate + ADP. It carries out the reaction a ribonucleoside 5'-diphosphate + ATP = a ribonucleoside 5'-triphosphate + ADP. Functionally, major role in the synthesis of nucleoside triphosphates other than ATP. The ATP gamma phosphate is transferred to the NDP beta phosphate via a ping-pong mechanism, using a phosphorylated active-site intermediate. In Desulfovibrio desulfuricans (strain ATCC 27774 / DSM 6949 / MB), this protein is Nucleoside diphosphate kinase.